The sequence spans 290 residues: NAD kinase (290 aa).

The Proton acceptor role is filled by D75. Residues 75 to 76 (DG), 148 to 149 (NE), D178, 189 to 194 (TAYNIS), and Q247 each bind NAD(+).

This sequence belongs to the NAD kinase family. The cofactor is a divalent metal cation.

It localises to the cytoplasm. It catalyses the reaction NAD(+) + ATP = ADP + NADP(+) + H(+). Functionally, involved in the regulation of the intracellular balance of NAD and NADP, and is a key enzyme in the biosynthesis of NADP. Catalyzes specifically the phosphorylation on 2'-hydroxyl of the adenosine moiety of NAD to yield NADP. The chain is NAD kinase from Wolinella succinogenes (strain ATCC 29543 / DSM 1740 / CCUG 13145 / JCM 31913 / LMG 7466 / NCTC 11488 / FDC 602W) (Vibrio succinogenes).